The sequence spans 319 residues: Cytochrome c biogenesis protein CcsA (319 aa).

5 helical membrane passes run 14 to 34, 46 to 66, 74 to 94, 97 to 117, and 142 to 162; these read AFAV…FPQW, AIAN…GGYF, SLFF…SISG, LVGV…ALSL, and VMML…ALLV. Residues 175–201 are disordered; the sequence is SVGTGSFRSRRPEPSLEASTGNGGTTV. The segment covering 191-201 has biased composition (polar residues); sequence EASTGNGGTTV. Transmembrane regions (helical) follow at residues 227–247, 254–274, and 288–308; these read MIGL…VWAN, WSWD…AAYL, and AILA…VNLL.

Belongs to the CcmF/CycK/Ccl1/NrfE/CcsA family. As to quaternary structure, may interact with ccs1.

The protein resides in the cellular thylakoid membrane. Functionally, required during biogenesis of c-type cytochromes (cytochrome c6 and cytochrome f) at the step of heme attachment. The chain is Cytochrome c biogenesis protein CcsA from Thermosynechococcus vestitus (strain NIES-2133 / IAM M-273 / BP-1).